The primary structure comprises 206 residues: Uridine kinase (206 aa).

Residue 9–16 (GGSGSGKT) participates in ATP binding.

Belongs to the uridine kinase family. As to quaternary structure, monomer.

The protein resides in the cytoplasm. The enzyme catalyses uridine + ATP = UMP + ADP + H(+). It carries out the reaction cytidine + ATP = CMP + ADP + H(+). It participates in pyrimidine metabolism; CTP biosynthesis via salvage pathway; CTP from cytidine: step 1/3. Its pathway is pyrimidine metabolism; UMP biosynthesis via salvage pathway; UMP from uridine: step 1/1. The polypeptide is Uridine kinase (udk) (Borreliella burgdorferi (strain ATCC 35210 / DSM 4680 / CIP 102532 / B31) (Borrelia burgdorferi)).